A 161-amino-acid polypeptide reads, in one-letter code: Anther-specific protein LAT52 (161 aa).

A signal peptide spans 1–17 (MAKAIVLLSALCILALA). Disulfide bonds link Cys-35–Cys-106, Cys-38–Cys-147, and Cys-59–Cys-94. N-linked (GlcNAc...) asparagine glycosylation occurs at Asn-61.

The protein belongs to the Ole e I family. Expressed in anthers and pollen.

May play a role during germination or early tube growth. This is Anther-specific protein LAT52 (LAT52) from Solanum lycopersicum (Tomato).